Reading from the N-terminus, the 421-residue chain is Lipid II:glycine glycyltransferase (421 aa).

This sequence belongs to the FemABX family. As to quaternary structure, monomer.

It is found in the cytoplasm. The enzyme catalyses beta-D-GlcNAc-(1-&gt;4)-Mur2Ac(oyl-L-Ala-D-isoglutaminyl-L-Lys-D-Ala-D-Ala)-di-trans,octa-cis-undecaprenyl diphosphate + glycyl-tRNA(Gly) = beta-D-GlcNAc-(1-&gt;4)-Mur2Ac(oyl-L-Ala-D-isoglutaminyl-L-Lys-(N(6)-Gly)-D-Ala-D-Ala)-di-trans,octa-cis-undecaprenyl diphosphate + tRNA(Gly) + H(+). Catalyzes the incorporation of the first glycine of the pentaglycine interpeptide bridge, which is characteristic of the S.aureus peptidoglycan. This glycine is added to the epsilon-amino group of the L-lysine of the membrane-bound lipid II intermediate (GlcNAc-(beta-1,4)-N-acetylmuramic acid(-L-Ala-D-iGln-L-Lys-D-Ala-D-Ala)-pyrophosphoryl-undecaprenol), using glycyl-tRNA(Gly) as donor, in a ribosome-independent mechanism. Involved in methicillin resistance. The protein is Lipid II:glycine glycyltransferase (femX) of Staphylococcus aureus (strain Mu50 / ATCC 700699).